The chain runs to 680 residues: DNA-directed RNA polymerase subunit beta' (680 aa).

Zn(2+) is bound by residues Cys69, Cys71, Cys87, and Cys90. Mg(2+) is bound by residues Asp489, Asp491, and Asp493.

This sequence belongs to the RNA polymerase beta' chain family. RpoC1 subfamily. In terms of assembly, in plastids the minimal PEP RNA polymerase catalytic core is composed of four subunits: alpha, beta, beta', and beta''. When a (nuclear-encoded) sigma factor is associated with the core the holoenzyme is formed, which can initiate transcription. Mg(2+) is required as a cofactor. Zn(2+) serves as cofactor.

The protein localises to the plastid. It localises to the chloroplast. The enzyme catalyses RNA(n) + a ribonucleoside 5'-triphosphate = RNA(n+1) + diphosphate. Its function is as follows. DNA-dependent RNA polymerase catalyzes the transcription of DNA into RNA using the four ribonucleoside triphosphates as substrates. In Arabidopsis thaliana (Mouse-ear cress), this protein is DNA-directed RNA polymerase subunit beta'.